A 393-amino-acid chain; its full sequence is NAD(P)H-quinone oxidoreductase subunit H 1 (393 aa).

The protein belongs to the complex I 49 kDa subunit family. NDH-1 can be composed of about 15 different subunits; different subcomplexes with different compositions have been identified which probably have different functions.

The protein resides in the cell inner membrane. It catalyses the reaction a plastoquinone + NADH + (n+1) H(+)(in) = a plastoquinol + NAD(+) + n H(+)(out). The enzyme catalyses a plastoquinone + NADPH + (n+1) H(+)(in) = a plastoquinol + NADP(+) + n H(+)(out). NDH-1 shuttles electrons from an unknown electron donor, via FMN and iron-sulfur (Fe-S) centers, to quinones in the respiratory and/or the photosynthetic chain. The immediate electron acceptor for the enzyme in this species is believed to be plastoquinone. Couples the redox reaction to proton translocation, and thus conserves the redox energy in a proton gradient. Cyanobacterial NDH-1 also plays a role in inorganic carbon-concentration. The sequence is that of NAD(P)H-quinone oxidoreductase subunit H 1 from Gloeobacter violaceus (strain ATCC 29082 / PCC 7421).